A 414-amino-acid chain; its full sequence is Transforming growth factor beta-2 proprotein (414 aa).

The N-terminal stretch at 1–20 (MHYCVLSTFLLLHLVPVALS) is a signal peptide. Residues asparagine 72, asparagine 140, and asparagine 241 are each glycosylated (N-linked (GlcNAc...) asparagine). 4 disulfides stabilise this stretch: cysteine 309/cysteine 318, cysteine 317/cysteine 380, cysteine 346/cysteine 411, and cysteine 350/cysteine 413.

Belongs to the TGF-beta family. Interacts with the serine proteases, HTRA1 and HTRA3. Interacts with ASPN. Interacts with MFAP5. In terms of assembly, interacts with Transforming growth factor beta-2 (TGF-beta-2) chain; interaction is non-covalent and maintains (TGF-beta-2) in a latent state. Interacts with LRRC32/GARP; leading to regulate activation of TGF-beta-2. Interacts with NREP; the interaction results in a decrease in TGFB2 autoinduction. As to quaternary structure, transforming growth factor beta-2: Homodimer; disulfide-linked. Transforming growth factor beta-2: Interacts with TGF-beta receptors (TGFBR1 and TGFBR2), leading to signal transduction. The precursor proprotein is cleaved in the Golgi apparatus to form Transforming growth factor beta-2 (TGF-beta-2) and Latency-associated peptide (LAP) chains, which remain non-covalently linked, rendering TGF-beta-2 inactive.

It is found in the secreted. It localises to the extracellular space. The protein resides in the extracellular matrix. Precursor of the Latency-associated peptide (LAP) and Transforming growth factor beta-2 (TGF-beta-2) chains, which constitute the regulatory and active subunit of TGF-beta-2, respectively. Its function is as follows. Required to maintain the Transforming growth factor beta-2 (TGF-beta-2) chain in a latent state during storage in extracellular matrix. Associates non-covalently with TGF-beta-2 and regulates its activation via interaction with 'milieu molecules', such as LTBP1 and LRRC32/GARP, that control activation of TGF-beta-2. In terms of biological role, multifunctional protein that regulates various processes such as angiogenesis and heart development. Activation into mature form follows different steps: following cleavage of the proprotein in the Golgi apparatus, Latency-associated peptide (LAP) and Transforming growth factor beta-2 (TGF-beta-2) chains remain non-covalently linked rendering TGF-beta-2 inactive during storage in extracellular matrix. At the same time, LAP chain interacts with 'milieu molecules', such as LTBP1 and LRRC32/GARP, that control activation of TGF-beta-2 and maintain it in a latent state during storage in extracellular milieus. Once activated following release of LAP, TGF-beta-2 acts by binding to TGF-beta receptors (TGFBR1 and TGFBR2), which transduce signal. This Mus musculus (Mouse) protein is Transforming growth factor beta-2 proprotein (Tgfb2).